Consider the following 96-residue polypeptide: Large ribosomal subunit protein bL27 (96 aa).

The segment at 12–33 is disordered; the sequence is HKGGGSSANGRNSAGRRLGAKA. Residues 19-28 show a composition bias toward low complexity; the sequence is ANGRNSAGRR.

It belongs to the bacterial ribosomal protein bL27 family.

In Lactobacillus helveticus (strain DPC 4571), this protein is Large ribosomal subunit protein bL27.